Here is a 156-residue protein sequence, read N- to C-terminus: Ribosomal RNA large subunit methyltransferase H (156 aa).

S-adenosyl-L-methionine-binding positions include Leu73, Gly104, and 123–128 (LSPLTL).

This sequence belongs to the RNA methyltransferase RlmH family. In terms of assembly, homodimer.

It localises to the cytoplasm. It catalyses the reaction pseudouridine(1915) in 23S rRNA + S-adenosyl-L-methionine = N(3)-methylpseudouridine(1915) in 23S rRNA + S-adenosyl-L-homocysteine + H(+). Specifically methylates the pseudouridine at position 1915 (m3Psi1915) in 23S rRNA. The protein is Ribosomal RNA large subunit methyltransferase H of Sodalis glossinidius (strain morsitans).